We begin with the raw amino-acid sequence, 411 residues long: Na(+)-translocating NADH-quinone reductase subunit B (411 aa).

Transmembrane regions (helical) follow at residues 56–76, 121–141, and 161–181; these read IMITVWLCTFPAMFFGMYNAG, FLPIYLVTFAVGGFWEVLFAV, and ILPATIPLWQVALGITFGVVI. FMN phosphoryl threonine is present on Thr228. 5 consecutive transmembrane segments (helical) span residues 254–274, 284–304, 309–329, 345–365, and 368–388; these read FIPGSVGETSTLAILIGAAVL, IMLGVFVGMALTAMLFTAIGS, MFGMPWYWHLVLGGFAFGMVF, LLFGFLIGVMTVLIRVVNPAF, and GIMLAILFANLFAPMIDHFFV.

It belongs to the NqrB/RnfD family. As to quaternary structure, composed of six subunits; NqrA, NqrB, NqrC, NqrD, NqrE and NqrF. The cofactor is FMN.

The protein localises to the cell inner membrane. It catalyses the reaction a ubiquinone + n Na(+)(in) + NADH + H(+) = a ubiquinol + n Na(+)(out) + NAD(+). Its function is as follows. NQR complex catalyzes the reduction of ubiquinone-1 to ubiquinol by two successive reactions, coupled with the transport of Na(+) ions from the cytoplasm to the periplasm. NqrA to NqrE are probably involved in the second step, the conversion of ubisemiquinone to ubiquinol. This is Na(+)-translocating NADH-quinone reductase subunit B from Chromohalobacter salexigens (strain ATCC BAA-138 / DSM 3043 / CIP 106854 / NCIMB 13768 / 1H11).